The following is a 309-amino-acid chain: ATP synthase gamma chain (309 aa).

Belongs to the ATPase gamma chain family. In terms of assembly, F-type ATPases have 2 components, CF(1) - the catalytic core - and CF(0) - the membrane proton channel. CF(1) has five subunits: alpha(3), beta(3), gamma(1), delta(1), epsilon(1). CF(0) has three main subunits: a, b and c.

Its subcellular location is the cell membrane. Produces ATP from ADP in the presence of a proton gradient across the membrane. The gamma chain is believed to be important in regulating ATPase activity and the flow of protons through the CF(0) complex. This chain is ATP synthase gamma chain, found in Salinispora tropica (strain ATCC BAA-916 / DSM 44818 / JCM 13857 / NBRC 105044 / CNB-440).